The sequence spans 575 residues: Muellerian-inhibiting factor (575 aa).

Residues 1 to 24 (MPGPSLSLALVLSAMGALLRPGTP) form the signal peptide. Positions 25 to 466 (REEVFSTSAL…ERSGSARAQR (442 aa)) are excised as a propeptide. Residues Asn-78 and Asn-344 are each glycosylated (N-linked (GlcNAc...) asparagine). Disulfide bonds link Cys-477-Cys-541, Cys-503-Cys-572, and Cys-507-Cys-574.

This sequence belongs to the TGF-beta family. Homodimer; disulfide-linked. Post-translationally, preproprotein is proteolytically processed to generate N- and C-terminal cleavage products that homodimerize and associate to form a biologically active non-covalent complex. Binding of the non-covalent complex to AMHR2 induces dissociation of the pro-region from the mature C-terminal dimer. The N-terminal portion of the protein, despite having no intrinsic activity, has the role of amplifying the activity of the C-terminus. Expressed in fetal testis and adult ovaries.

It localises to the secreted. In terms of biological role, plays an important role in several reproductive functions. Induces Muellerian duct regression during male fetal sexual differentiation and plays a role in Leydig cell differentiation and function. In female acts as a negative regulator of the primordial to primary follicle transition and decreases FSH sensitivity of growing follicles. AMH signals by binding to a specific type-II receptor, AMHR2, that heterodimerizes with type-I receptors (ACVR1 and BMPR1A), and recruiting SMAD proteins that are translocated to the nucleus to regulate target gene expression. This chain is Muellerian-inhibiting factor (AMH), found in Bos taurus (Bovine).